Here is a 473-residue protein sequence, read N- to C-terminus: Mannose-1-phosphate guanylyltransferase (473 aa).

It belongs to the mannose-6-phosphate isomerase type 2 family. In terms of assembly, homodimer.

It catalyses the reaction alpha-D-mannose 1-phosphate + GTP + H(+) = GDP-alpha-D-mannose + diphosphate. The protein operates within nucleotide-sugar biosynthesis; GDP-alpha-D-mannose biosynthesis; GDP-alpha-D-mannose from alpha-D-mannose 1-phosphate (GTP route): step 1/1. Its pathway is bacterial outer membrane biogenesis; LPS O-antigen biosynthesis. Functionally, involved in GDP-mannose biosynthesis which serves as the activated sugar nucleotide precursor for mannose residues in cell surface polysaccharides. This enzyme participates in synthesis of the LPS group C2 O antigen. The chain is Mannose-1-phosphate guanylyltransferase (rfbM) from Salmonella muenchen.